Reading from the N-terminus, the 82-residue chain is Small ribosomal subunit protein uS17 (82 aa).

It belongs to the universal ribosomal protein uS17 family. As to quaternary structure, part of the 30S ribosomal subunit.

In terms of biological role, one of the primary rRNA binding proteins, it binds specifically to the 5'-end of 16S ribosomal RNA. This chain is Small ribosomal subunit protein uS17, found in Shewanella pealeana (strain ATCC 700345 / ANG-SQ1).